Reading from the N-terminus, the 476-residue chain is Aspartyl/glutamyl-tRNA(Asn/Gln) amidotransferase subunit B (476 aa).

It belongs to the GatB/GatE family. GatB subfamily. As to quaternary structure, heterotrimer of A, B and C subunits.

The enzyme catalyses L-glutamyl-tRNA(Gln) + L-glutamine + ATP + H2O = L-glutaminyl-tRNA(Gln) + L-glutamate + ADP + phosphate + H(+). The catalysed reaction is L-aspartyl-tRNA(Asn) + L-glutamine + ATP + H2O = L-asparaginyl-tRNA(Asn) + L-glutamate + ADP + phosphate + 2 H(+). Functionally, allows the formation of correctly charged Asn-tRNA(Asn) or Gln-tRNA(Gln) through the transamidation of misacylated Asp-tRNA(Asn) or Glu-tRNA(Gln) in organisms which lack either or both of asparaginyl-tRNA or glutaminyl-tRNA synthetases. The reaction takes place in the presence of glutamine and ATP through an activated phospho-Asp-tRNA(Asn) or phospho-Glu-tRNA(Gln). The sequence is that of Aspartyl/glutamyl-tRNA(Asn/Gln) amidotransferase subunit B from Lactobacillus gasseri (strain ATCC 33323 / DSM 20243 / BCRC 14619 / CIP 102991 / JCM 1131 / KCTC 3163 / NCIMB 11718 / NCTC 13722 / AM63).